We begin with the raw amino-acid sequence, 114 residues long: Snake venom vascular endothelial growth factor (114 aa).

Gln-1 is subject to Pyrrolidone carboxylic acid. 3 disulfides stabilise this stretch: Cys-14-Cys-56, Cys-45-Cys-91, and Cys-49-Cys-93. Residues 92–114 (ECRPGSTVNNGKRKKNPKEGEPR) form a disordered region.

It belongs to the PDGF/VEGF growth factor family. Snake venom VEGF subfamily. Homodimer; disulfide-linked. Interacts with human VEGF receptor 1/FLT1. Interacts with human VEGF receptor 2/KDR. As to expression, expressed by venom gland.

It is found in the secreted. Functionally, snake venom vascular endothelial growth factor (svVEGF) that may contribute to venom dispersion and prey subjugation by inducing vascular permeability and hypotension. Induces an increase in capillary permeability after intradermal injection, as well as a drastic hypotensive effect after intravenous injection. The hypotension is mediated by nitric oxide (NO), which is produced by VEGF-activated endothelium NO synthase. Induces angiogenesis and migration of human vascular endothelial cells in vitro. Exhibits angiogenic activity by inducing human umbilical vein endothelial cells (HUVEC) to develop vessels in vitro. Induces cellular migration of HUVEC cells towards a wound in scratch assays, enhancing wound closure after 12 h by 49.5%. Induces dose-dependent leukocyte recruitment to the peritoneal cavity leading to increased vascular permeability in mice. This Crotalus durissus terrificus (South American rattlesnake) protein is Snake venom vascular endothelial growth factor.